We begin with the raw amino-acid sequence, 421 residues long: MLELKFMRENVEMLKEMLKNRNSNVDMDAFVELDSKRREVLSEVENLKRERNNASAEIANLKKEKKNADHIIEKMGEVSTKIKDLDAELVEIDEKIKDIQLNIPNVYHPSTPIGPDEDYNLEIRKWGIPKKFDFEPKSHWDIGEDLGILDFERGAKLSGSRFVLYRGAAARLERAIINFMLDVHTLEEGYTEHITPFMVKAEVCEGTGQLPKFEEDMYKTTDDMYLISTSEITMTNIHRKEILEQAELPKYYTAYSPCFRREAGSYGKDVKGLIRLHQFNKVEMVKITDAESSYDELEKMVNNAETILQRLELPYRVIQLCSGDLGFSAAKTYDLEVWLPSQNKYREISSCSNCEAFQARRMGLKYRVPNGSEFCHTLNGSGLAVGRTLVAIMENYQQEDGSFLVPKVLIPYMGGVDVIKK.

229 to 231 (TSE) serves as a coordination point for L-serine. 260–262 (RRE) contributes to the ATP binding site. E283 lines the L-serine pocket. Residue 347 to 350 (EISS) participates in ATP binding. S381 lines the L-serine pocket.

The protein belongs to the class-II aminoacyl-tRNA synthetase family. Type-1 seryl-tRNA synthetase subfamily. In terms of assembly, homodimer. The tRNA molecule binds across the dimer.

The protein localises to the cytoplasm. It catalyses the reaction tRNA(Ser) + L-serine + ATP = L-seryl-tRNA(Ser) + AMP + diphosphate + H(+). It carries out the reaction tRNA(Sec) + L-serine + ATP = L-seryl-tRNA(Sec) + AMP + diphosphate + H(+). It functions in the pathway aminoacyl-tRNA biosynthesis; selenocysteinyl-tRNA(Sec) biosynthesis; L-seryl-tRNA(Sec) from L-serine and tRNA(Sec): step 1/1. In terms of biological role, catalyzes the attachment of serine to tRNA(Ser). Is also able to aminoacylate tRNA(Sec) with serine, to form the misacylated tRNA L-seryl-tRNA(Sec), which will be further converted into selenocysteinyl-tRNA(Sec). In Fusobacterium nucleatum subsp. nucleatum (strain ATCC 25586 / DSM 15643 / BCRC 10681 / CIP 101130 / JCM 8532 / KCTC 2640 / LMG 13131 / VPI 4355), this protein is Serine--tRNA ligase.